Here is a 103-residue protein sequence, read N- to C-terminus: Large ribosomal subunit protein uL24 (103 aa).

This sequence belongs to the universal ribosomal protein uL24 family. In terms of assembly, part of the 50S ribosomal subunit.

Functionally, one of two assembly initiator proteins, it binds directly to the 5'-end of the 23S rRNA, where it nucleates assembly of the 50S subunit. Its function is as follows. One of the proteins that surrounds the polypeptide exit tunnel on the outside of the subunit. This is Large ribosomal subunit protein uL24 from Corynebacterium urealyticum (strain ATCC 43042 / DSM 7109).